A 179-amino-acid polypeptide reads, in one-letter code: MLKIWSMKEKQAAEGGSAKKKVTAAQLRVQKDLSELSLPSTMKTHFPSAEDIMNFELTVRPDEGFYQGGEFRFSFYVNPNFPHEPPKVKCLQKVYHPNIDLEGNVCLNILREDWKPVLSLNAVMIGLQYLFLEPNASDPLNKDAAHQMTANREEFKRNVKHSMAGGSVAGERFDCVLIK.

In terms of domain architecture, UBC core spans 24–168 (AAQLRVQKDL…VKHSMAGGSV (145 aa)). The active-site Glycyl thioester intermediate is the Cys106.

It belongs to the ubiquitin-conjugating enzyme family. UBC12 subfamily.

It catalyses the reaction [E1 NEDD8-activating enzyme]-S-[NEDD8 protein]-yl-L-cysteine + [E2 NEDD8-conjugating enzyme]-L-cysteine = [E1 NEDD8-activating enzyme]-L-cysteine + [E2 NEDD8-conjugating enzyme]-S-[NEDD8-protein]-yl-L-cysteine.. Its pathway is protein modification; protein neddylation. Functionally, accepts the ubiquitin-like protein NEDD8/RUB1 from the UBA3-ULA1 E1 complex and catalyzes its covalent attachment to other proteins. This is NEDD8-conjugating enzyme UBC12 (UBC12) from Yarrowia lipolytica (strain CLIB 122 / E 150) (Yeast).